A 332-amino-acid polypeptide reads, in one-letter code: Cytoplasmic phosphatidylinositol transfer protein 1 (332 aa).

Phosphoserine is present on residues Ser119, Ser270, and Ser274. Over residues 267–285 (SVRSAPSSAPSTPLSTDAP) the composition is skewed to low complexity. A disordered region spans residues 267 to 332 (SVRSAPSSAP…SDKPCRPKSE (66 aa)). Thr278 is subject to Phosphothreonine. The segment covering 322–332 (SSDKPCRPKSE) has biased composition (basic and acidic residues).

The protein belongs to the PtdIns transfer protein family. PI transfer class IIB subfamily. In terms of tissue distribution, ubiquitously expressed.

It localises to the cytoplasm. The catalysed reaction is a 1,2-diacyl-sn-glycero-3-phospho-(1D-myo-inositol)(in) = a 1,2-diacyl-sn-glycero-3-phospho-(1D-myo-inositol)(out). It catalyses the reaction a 1,2-diacyl-sn-glycero-3-phosphate(in) = a 1,2-diacyl-sn-glycero-3-phosphate(out). In terms of biological role, catalyzes the transfer of phosphatidylinositol (PI) and phosphatidic acid (PA) between membranes. Binds PA derived from the phospholipase D signaling pathway and among the cellular PA species, preferably binds to the C16:0/16:1 and C16:1/18:1 PA species. Its function is as follows. Catalyzes the transfer of phosphatidylinositol between membranes. The chain is Cytoplasmic phosphatidylinositol transfer protein 1 (PITPNC1) from Homo sapiens (Human).